The sequence spans 119 residues: Holo-[acyl-carrier-protein] synthase (119 aa).

Mg(2+) is bound by residues Asp8 and Glu59.

This sequence belongs to the P-Pant transferase superfamily. AcpS family. Mg(2+) is required as a cofactor.

The protein resides in the cytoplasm. The catalysed reaction is apo-[ACP] + CoA = holo-[ACP] + adenosine 3',5'-bisphosphate + H(+). Its function is as follows. Transfers the 4'-phosphopantetheine moiety from coenzyme A to a Ser of acyl-carrier-protein. The protein is Holo-[acyl-carrier-protein] synthase of Lactococcus lactis subsp. cremoris (strain SK11).